Consider the following 722-residue polypeptide: Cellulose synthase-like protein G2 (722 aa).

2 helical membrane passes run 25–45 (IYAV…VHSI) and 51–71 (TLIT…WATT). Active-site residues include Asp-139 and Asp-437. 6 helical membrane-spanning segments follow: residues 514-534 (FWPF…VALI), 548-568 (FWLY…DFLL), 583-605 (WMVR…TLNL), 635-655 (PSSS…LAFM), 660-680 (GIFT…FAVV), and 702-722 (ICFL…FFLK).

Belongs to the glycosyltransferase 2 family. Plant cellulose synthase-like G subfamily. In terms of tissue distribution, expressed in young seedlings, primarily in the vascular tissue.

Its subcellular location is the golgi apparatus membrane. Functionally, thought to be a Golgi-localized beta-glycan synthase that polymerize the backbones of noncellulosic polysaccharides (hemicelluloses) of plant cell wall. The sequence is that of Cellulose synthase-like protein G2 (CSLG2) from Arabidopsis thaliana (Mouse-ear cress).